Reading from the N-terminus, the 419-residue chain is S-adenosylmethionine synthase (419 aa).

His-15 provides a ligand contact to ATP. Asp-17 contacts Mg(2+). Glu-43 is a K(+) binding site. L-methionine-binding residues include Glu-56 and Gln-100. The flexible loop stretch occupies residues 100–110 (QSPDIAQGVDE). Residues 171-173 (DGK), 248-249 (KF), Asp-257, 263-264 (RK), Ala-280, and Lys-284 contribute to the ATP site. Asp-257 is an L-methionine binding site. Lys-288 contacts L-methionine.

Belongs to the AdoMet synthase family. As to quaternary structure, homotetramer; dimer of dimers. Requires Mg(2+) as cofactor. The cofactor is K(+).

The protein resides in the cytoplasm. The enzyme catalyses L-methionine + ATP + H2O = S-adenosyl-L-methionine + phosphate + diphosphate. It functions in the pathway amino-acid biosynthesis; S-adenosyl-L-methionine biosynthesis; S-adenosyl-L-methionine from L-methionine: step 1/1. In terms of biological role, catalyzes the formation of S-adenosylmethionine (AdoMet) from methionine and ATP. The overall synthetic reaction is composed of two sequential steps, AdoMet formation and the subsequent tripolyphosphate hydrolysis which occurs prior to release of AdoMet from the enzyme. The chain is S-adenosylmethionine synthase from Synechococcus sp. (strain CC9311).